We begin with the raw amino-acid sequence, 303 residues long: Foldase protein PrsA (303 aa).

Positions M1–G20 are cleaved as a signal peptide. C21 is lipidated: N-palmitoyl cysteine. C21 carries S-diacylglycerol cysteine lipidation. Residues E137–K233 enclose the PpiC domain.

Belongs to the PrsA family.

It localises to the cell membrane. It catalyses the reaction [protein]-peptidylproline (omega=180) = [protein]-peptidylproline (omega=0). Plays a major role in protein secretion by helping the post-translocational extracellular folding of several secreted proteins. This is Foldase protein PrsA from Latilactobacillus sakei subsp. sakei (strain 23K) (Lactobacillus sakei subsp. sakei).